Here is a 277-residue protein sequence, read N- to C-terminus: Probable endonuclease 4 (277 aa).

Residues histidine 67, histidine 107, glutamate 142, aspartate 176, histidine 179, histidine 211, aspartate 224, histidine 226, and glutamate 256 each contribute to the Zn(2+) site.

This sequence belongs to the AP endonuclease 2 family. Zn(2+) serves as cofactor.

It catalyses the reaction Endonucleolytic cleavage to 5'-phosphooligonucleotide end-products.. Its function is as follows. Endonuclease IV plays a role in DNA repair. It cleaves phosphodiester bonds at apurinic or apyrimidinic (AP) sites, generating a 3'-hydroxyl group and a 5'-terminal sugar phosphate. This is Probable endonuclease 4 from Clostridium botulinum (strain Alaska E43 / Type E3).